The sequence spans 483 residues: MKFIIKLFPEITIKSQSVRIRFIKILTSNIRNVLSTLGDDITVVRHWDNIVVVSKDESKSEAVCDALTRIPGIHHFLQVEEHSYTDLHNIFEQTFAAFGHLVENKTFCVRAKRRGKHSFTSNEVERYVGGGFNQHVESAKVKLTRPDVTINLEIEDDKLILVNARYEGIGGFPIGTQEDVLSLISGGYDSGVSSYMLMRRGSRVHYCFFNLGGSAHEIGVKQVAHYLWNRFGRSHKVHFVAVDFEPVVAEILEKIDDGQMGVVLKRMMVRAASRVAERYGVQAIVTGEALGQVSSQTLTNLRLIDNATDTLILRPLITHDKENIINIARQIGTEDFARTMPEFCGVISKNPTVKAVKAKIEAEEEKFDFSILDSVVENAKNMDIRRIAEETVQQVTEVEMVSEFATNDVVLDIRSPEEQENSPLKLEGVDVKELPFYKLSTQFGDLDNSKTYLLYCERGMMSRLQALYLREQGFNNVKVYRKK.

The THUMP domain maps to 61 to 165 (EAVCDALTRI…DDKLILVNAR (105 aa)). ATP contacts are provided by residues 183-184 (LI), K265, G287, and Q296. C344 and C456 are joined by a disulfide. A Rhodanese domain is found at 404–483 (FATNDVVLDI…FNNVKVYRKK (80 aa)). Residue C456 is the Cysteine persulfide intermediate of the active site.

This sequence belongs to the ThiI family.

It is found in the cytoplasm. It catalyses the reaction [ThiI sulfur-carrier protein]-S-sulfanyl-L-cysteine + a uridine in tRNA + 2 reduced [2Fe-2S]-[ferredoxin] + ATP + H(+) = [ThiI sulfur-carrier protein]-L-cysteine + a 4-thiouridine in tRNA + 2 oxidized [2Fe-2S]-[ferredoxin] + AMP + diphosphate. The enzyme catalyses [ThiS sulfur-carrier protein]-C-terminal Gly-Gly-AMP + S-sulfanyl-L-cysteinyl-[cysteine desulfurase] + AH2 = [ThiS sulfur-carrier protein]-C-terminal-Gly-aminoethanethioate + L-cysteinyl-[cysteine desulfurase] + A + AMP + 2 H(+). The protein operates within cofactor biosynthesis; thiamine diphosphate biosynthesis. Functionally, catalyzes the ATP-dependent transfer of a sulfur to tRNA to produce 4-thiouridine in position 8 of tRNAs, which functions as a near-UV photosensor. Also catalyzes the transfer of sulfur to the sulfur carrier protein ThiS, forming ThiS-thiocarboxylate. This is a step in the synthesis of thiazole, in the thiamine biosynthesis pathway. The sulfur is donated as persulfide by IscS. The polypeptide is tRNA sulfurtransferase (Proteus mirabilis (strain HI4320)).